A 203-amino-acid chain; its full sequence is Inosine triphosphate pyrophosphatase (203 aa).

An ITP-binding site is contributed by 13–18 (TGNAKK). A Mg(2+)-binding site is contributed by E43. ITP-binding positions include K55, 71–72 (DT), K88, 147–150 (FGWD), K170, and 175–176 (HR).

This sequence belongs to the HAM1 NTPase family. Homodimer. It depends on Mg(2+) as a cofactor. Mn(2+) is required as a cofactor.

Its subcellular location is the cytoplasm. It carries out the reaction ITP + H2O = IMP + diphosphate + H(+). The catalysed reaction is dITP + H2O = dIMP + diphosphate + H(+). It catalyses the reaction XTP + H2O = XMP + diphosphate + H(+). The enzyme catalyses N(6)-hydroxy-dATP + H2O = N(6)-hydroxy-dAMP + diphosphate + H(+). Its function is as follows. Pyrophosphatase that hydrolyzes the non-canonical purine nucleotides inosine triphosphate (ITP), deoxyinosine triphosphate (dITP) as well as 2'-deoxy-N-6-hydroxylaminopurine triphosphate (dHAPTP) and xanthosine 5'-triphosphate (XTP) to their respective monophosphate derivatives. The enzyme does not distinguish between the deoxy- and ribose forms. Probably excludes non-canonical purines from RNA and DNA precursor pools, thus preventing their incorporation into RNA and DNA and avoiding chromosomal lesions. The sequence is that of Inosine triphosphate pyrophosphatase (itpa) from Danio rerio (Zebrafish).